Reading from the N-terminus, the 445-residue chain is tRNA-2-methylthio-N(6)-dimethylallyladenosine synthase (445 aa).

Residues 3-124 (KKLYIKTYGC…LPELISKVVR (122 aa)) enclose the MTTase N-terminal domain. [4Fe-4S] cluster-binding residues include cysteine 12, cysteine 48, cysteine 87, cysteine 162, cysteine 166, and cysteine 169. A Radical SAM core domain is found at 148–380 (YPQGASSFIS…QQELATQQLA (233 aa)). Residues 383–445 (QSCVGSTMRV…ALNSLTGEIL (63 aa)) enclose the TRAM domain.

This sequence belongs to the methylthiotransferase family. MiaB subfamily. Monomer. It depends on [4Fe-4S] cluster as a cofactor.

Its subcellular location is the cytoplasm. It carries out the reaction N(6)-dimethylallyladenosine(37) in tRNA + (sulfur carrier)-SH + AH2 + 2 S-adenosyl-L-methionine = 2-methylsulfanyl-N(6)-dimethylallyladenosine(37) in tRNA + (sulfur carrier)-H + 5'-deoxyadenosine + L-methionine + A + S-adenosyl-L-homocysteine + 2 H(+). Catalyzes the methylthiolation of N6-(dimethylallyl)adenosine (i(6)A), leading to the formation of 2-methylthio-N6-(dimethylallyl)adenosine (ms(2)i(6)A) at position 37 in tRNAs that read codons beginning with uridine. This chain is tRNA-2-methylthio-N(6)-dimethylallyladenosine synthase, found in Rickettsia prowazekii (strain Madrid E).